The chain runs to 428 residues: 3-phosphoshikimate 1-carboxyvinyltransferase (428 aa).

Residues Lys20, Ser21, and Arg25 each coordinate 3-phosphoshikimate. Residue Lys20 coordinates phosphoenolpyruvate. Phosphoenolpyruvate contacts are provided by Gly92 and Arg120. 3-phosphoshikimate is bound by residues Ser166, Gln168, Asp314, and Lys341. Gln168 lines the phosphoenolpyruvate pocket. Residue Asp314 is the Proton acceptor of the active site. Positions 345 and 387 each coordinate phosphoenolpyruvate.

Belongs to the EPSP synthase family. In terms of assembly, monomer.

The protein localises to the cytoplasm. It catalyses the reaction 3-phosphoshikimate + phosphoenolpyruvate = 5-O-(1-carboxyvinyl)-3-phosphoshikimate + phosphate. It participates in metabolic intermediate biosynthesis; chorismate biosynthesis; chorismate from D-erythrose 4-phosphate and phosphoenolpyruvate: step 6/7. In terms of biological role, catalyzes the transfer of the enolpyruvyl moiety of phosphoenolpyruvate (PEP) to the 5-hydroxyl of shikimate-3-phosphate (S3P) to produce enolpyruvyl shikimate-3-phosphate and inorganic phosphate. This Listeria innocua serovar 6a (strain ATCC BAA-680 / CLIP 11262) protein is 3-phosphoshikimate 1-carboxyvinyltransferase.